Consider the following 193-residue polypeptide: dITP/XTP pyrophosphatase (193 aa).

7–12 (SENENK) contacts substrate. Asp-65 acts as the Proton acceptor in catalysis. Asp-65 contacts Mg(2+). Residues Ser-66, 144 to 147 (FGYD), Lys-167, and 172 to 173 (HR) each bind substrate.

This sequence belongs to the HAM1 NTPase family. Homodimer. Requires Mg(2+) as cofactor.

The catalysed reaction is XTP + H2O = XMP + diphosphate + H(+). The enzyme catalyses dITP + H2O = dIMP + diphosphate + H(+). It catalyses the reaction ITP + H2O = IMP + diphosphate + H(+). Pyrophosphatase that catalyzes the hydrolysis of nucleoside triphosphates to their monophosphate derivatives, with a high preference for the non-canonical purine nucleotides XTP (xanthosine triphosphate), dITP (deoxyinosine triphosphate) and ITP. Seems to function as a house-cleaning enzyme that removes non-canonical purine nucleotides from the nucleotide pool, thus preventing their incorporation into DNA/RNA and avoiding chromosomal lesions. The sequence is that of dITP/XTP pyrophosphatase from Tropheryma whipplei (strain TW08/27) (Whipple's bacillus).